Consider the following 285-residue polypeptide: Dioxygenase andF (285 aa).

Residues His-128, Asp-130, and His-205 each contribute to the Fe cation site.

Belongs to the PhyH family. As to quaternary structure, homodimer. Requires Fe cation as cofactor.

The protein operates within secondary metabolite biosynthesis; terpenoid biosynthesis. Its function is as follows. Dioxygenase; part of the gene cluster that mediates the biosynthesis of anditomin, a fungal meroterpenoid. The first step of the pathway is the synthesis of 3,5-dimethylorsellinic acid (DMOA) by the polyketide synthase andM. DMOA is then converted to the phthalide compound 5,7-dihydroxy-4,6-dimethylphthalide (DHDMP) by the cytochrome P450 monooxygenase andK, which is further prenylated by the prenyltransferase andD to yield farnesyl-DHDMP. Further epoxidation by the FAD-dependent monooxygenase andE leads to epoxyfarnesyl-DHDMP. The next step involves the terpene cyclase andB that converts epoxyfarnesyl-DHDMP into preandiloid A through opening of the epoxide ring followed by the cyclization of the farnesyl moiety. Preandiloid A is in turn oxidized at the C-3 hydroxyl group to yield preandiloid B by the dehydrogenase andC. The dioxygenase andA is solely responsible for the dehydrogenation of preandiloid B leading to the enone preandiloid C, as well as for the intriguing structural rearrangement to generate the bicyclo[2.2.2]octane core, transforming preandiloid C into andiconin. FAD-binding monooxygenase andJ then produces andilesin D which is reduced by dehydrogenase andI to yield andilesin A. Action of acetyltransferase andG followed by a spontaneous acetate elimination leads then to andilesin B, which is in turn substrate of the short chain dehydrogenase andH to yield andilesin C. Finally, the dioxygenase andF catalyzes the transformation of andilesin C to anditomin. This chain is Dioxygenase andF, found in Emericella variicolor (Aspergillus stellatus).